A 128-amino-acid chain; its full sequence is EPIDERMAL PATTERNING FACTOR-like protein 2 (128 aa).

The N-terminal stretch at Met-1–Gly-28 is a signal peptide. 3 cysteine pairs are disulfide-bonded: Cys-60–Cys-119, Cys-65–Cys-71, and Cys-68–Cys-121. The segment covering Asn-79 to Thr-90 has biased composition (polar residues). Residues Asn-79–His-100 form a disordered region.

The protein belongs to the plant cysteine rich small secretory peptide family. Epidermal patterning factor subfamily.

It localises to the secreted. In terms of biological role, controls stomatal patterning. The protein is EPIDERMAL PATTERNING FACTOR-like protein 2 of Arabidopsis thaliana (Mouse-ear cress).